The primary structure comprises 93 residues: Mitochondrial import inner membrane translocase subunit Tim10-A (93 aa).

The short motif at 32–57 is the Twin CX3C motif element; that stretch reads CHKKCVPPHYKEAELSKGESVCLDRC. 2 disulfide bridges follow: cysteine 32–cysteine 57 and cysteine 36–cysteine 53.

It belongs to the small Tim family. In terms of assembly, heterohexamer; composed of 3 copies of TIMM9 and 3 copies of TIMM10/TIM10A, named soluble 70 kDa complex. The complex forms a 6-bladed alpha-propeller structure and associates with the TIMM22 component of the TIM22 complex. Interacts with multi-pass transmembrane proteins in transit.

The protein localises to the mitochondrion inner membrane. Mitochondrial intermembrane chaperone that participates in the import and insertion of multi-pass transmembrane proteins into the mitochondrial inner membrane. May also be required for the transfer of beta-barrel precursors from the TOM complex to the sorting and assembly machinery (SAM complex) of the outer membrane. Acts as a chaperone-like protein that protects the hydrophobic precursors from aggregation and guide them through the mitochondrial intermembrane space. This chain is Mitochondrial import inner membrane translocase subunit Tim10-A (timm10-a), found in Xenopus laevis (African clawed frog).